The primary structure comprises 286 residues: Pheromone receptor transcription factor (286 aa).

An N-acetylserine modification is found at Ser-2. At Ser-2 the chain carries Phosphoserine. Residues 18-72 (RRKIEIKFIENKTRRHVTFSKRKHGIMKKAFELSVLTGTQVLLLVVSETGLVYTF) form the MADS-box domain. The segment covering 97–119 (PDDEEEDEEEDGDDDDDDDDDGN) has biased composition (acidic residues). The tract at residues 97–137 (PDDEEEDEEEDGDDDDDDDDDGNDMQRQQPQQQQPQQQQQV) is disordered. A compositionally biased stretch (low complexity) spans 122–136 (QRQQPQQQQPQQQQQ). Ser-144 carries the phosphoserine modification. Residues 167 to 264 (LGGANPNQNS…QQAFANAASP (98 aa)) are disordered. The span at 171–246 (NPNQNSMIQQ…QQQQQQQQQP (76 aa)) shows a compositional bias: low complexity.

As to quaternary structure, homodimer. Binds DNA with a high specificity in complex with mating-type protein ALPHA1. Also binds DNA with a high specificity as a heterotetramer consisting of an ALPHA2 dimer and an MCM1 dimer. Interacts with YHP1 and YOX1, possibly leading to its inactivation. Interacts with ARG80 and ARG82.

Its subcellular location is the nucleus. Transcription factor required for the efficient replication of minichromosomes and the transcriptional regulation of early cell cycle genes. Activates transcription of ECB-dependent genes during the G1/M phase. Genes that contain a ECB (early cell box) element in their transcription regulatory region are transcribed only during G1/M phases. Interacts with the alpha-2 repressor or with the alpha-1 activator thereby regulating the expression of mating-type-specific genes. With ARG80, ARG81 and ARG82, coordinates the expression of arginine anabolic and catabolic genes in response to arginine. The protein is Pheromone receptor transcription factor (MCM1) of Saccharomyces cerevisiae (strain ATCC 204508 / S288c) (Baker's yeast).